The following is a 296-amino-acid chain: Glycine and tyrosine-rich protein (296 aa).

The signal sequence occupies residues 1–18; the sequence is MKVLVTALIISFSTAVLT. Residues 157–280 are disordered; sequence MESRLRPQAT…NQPEETPAPN (124 aa). The segment covering 172-264 has biased composition (low complexity); it reads TGGQPSTGGK…STGGQPSTGG (93 aa).

Component of the acid-insoluble and acid-soluble organic matrix of calcified layers of the shell (at protein level).

The protein localises to the secreted. This chain is Glycine and tyrosine-rich protein, found in Lottia gigantea (Giant owl limpet).